Reading from the N-terminus, the 167-residue chain is Transcription antitermination protein NusB (167 aa).

The tract at residues 1-21 (MIPTDTAPPSKPAQGHKGYKN) is disordered.

It belongs to the NusB family.

In terms of biological role, involved in transcription antitermination. Required for transcription of ribosomal RNA (rRNA) genes. Binds specifically to the boxA antiterminator sequence of the ribosomal RNA (rrn) operons. This Nitrosomonas eutropha (strain DSM 101675 / C91 / Nm57) protein is Transcription antitermination protein NusB.